A 364-amino-acid chain; its full sequence is Peroxisome biogenesis protein 3-2 (364 aa).

Residues 15–32 (VLVTAGCLGSGYLLYKLY) traverse the membrane as a helical segment. Positions 33–62 (NSHTRRLADLERELAHERENDEIIKTQMKA) form a coiled coil.

The protein belongs to the peroxin-3 family.

The protein localises to the peroxisome membrane. Functionally, involved in morphology determination of peroxisomes, but not in import of peroxisomal matrix proteins. May act as a docking factor for PEX19 and be necessary for the import of peroxisomal membrane proteins in the peroxisomes. In Arabidopsis thaliana (Mouse-ear cress), this protein is Peroxisome biogenesis protein 3-2 (PEX3-2).